The sequence spans 408 residues: Argininosuccinate synthase (408 aa).

ATP is bound by residues 11-19 (AYSGGLDTS) and alanine 38. L-citrulline-binding residues include tyrosine 91 and serine 96. ATP is bound at residue glycine 121. L-aspartate is bound by residues threonine 123, asparagine 127, and aspartate 128. An L-citrulline-binding site is contributed by asparagine 127. L-citrulline contacts are provided by arginine 131, serine 182, serine 191, glutamate 267, and tyrosine 279.

The protein belongs to the argininosuccinate synthase family. Type 1 subfamily. Homotetramer.

Its subcellular location is the cytoplasm. It carries out the reaction L-citrulline + L-aspartate + ATP = 2-(N(omega)-L-arginino)succinate + AMP + diphosphate + H(+). The protein operates within amino-acid biosynthesis; L-arginine biosynthesis; L-arginine from L-ornithine and carbamoyl phosphate: step 2/3. This chain is Argininosuccinate synthase, found in Azorhizobium caulinodans (strain ATCC 43989 / DSM 5975 / JCM 20966 / LMG 6465 / NBRC 14845 / NCIMB 13405 / ORS 571).